The chain runs to 55 residues: Large ribosomal subunit protein bL33 (55 aa).

This sequence belongs to the bacterial ribosomal protein bL33 family.

The protein is Large ribosomal subunit protein bL33 of Aliivibrio fischeri (strain ATCC 700601 / ES114) (Vibrio fischeri).